We begin with the raw amino-acid sequence, 192 residues long: Crossover junction endodeoxyribonuclease RuvC (192 aa).

Catalysis depends on residues Asp-8, Glu-67, and Asp-139. Asp-8, Glu-67, and Asp-139 together coordinate Mg(2+).

It belongs to the RuvC family. As to quaternary structure, homodimer which binds Holliday junction (HJ) DNA. The HJ becomes 2-fold symmetrical on binding to RuvC with unstacked arms; it has a different conformation from HJ DNA in complex with RuvA. In the full resolvosome a probable DNA-RuvA(4)-RuvB(12)-RuvC(2) complex forms which resolves the HJ. It depends on Mg(2+) as a cofactor.

The protein resides in the cytoplasm. It carries out the reaction Endonucleolytic cleavage at a junction such as a reciprocal single-stranded crossover between two homologous DNA duplexes (Holliday junction).. In terms of biological role, the RuvA-RuvB-RuvC complex processes Holliday junction (HJ) DNA during genetic recombination and DNA repair. Endonuclease that resolves HJ intermediates. Cleaves cruciform DNA by making single-stranded nicks across the HJ at symmetrical positions within the homologous arms, yielding a 5'-phosphate and a 3'-hydroxyl group; requires a central core of homology in the junction. The consensus cleavage sequence is 5'-(A/T)TT(C/G)-3'. Cleavage occurs on the 3'-side of the TT dinucleotide at the point of strand exchange. HJ branch migration catalyzed by RuvA-RuvB allows RuvC to scan DNA until it finds its consensus sequence, where it cleaves and resolves the cruciform DNA. In Haemophilus ducreyi (strain 35000HP / ATCC 700724), this protein is Crossover junction endodeoxyribonuclease RuvC.